Reading from the N-terminus, the 77-residue chain is U8-lycotoxin-Ls1e (77 aa).

An N-terminal signal peptide occupies residues 1-20 (MKLIIFTGLVLFAIVSLIEA). The propeptide occupies 21–26 (QAENEK).

It belongs to the neurotoxin 19 (CSTX) family. 08 (U8-Lctx) subfamily. Contains 4 disulfide bonds. Expressed by the venom gland.

The protein localises to the secreted. In Lycosa singoriensis (Wolf spider), this protein is U8-lycotoxin-Ls1e.